The following is a 77-amino-acid chain: DNA-directed RNA polymerase subunit omega (77 aa).

This sequence belongs to the RNA polymerase subunit omega family. The RNAP catalytic core consists of 2 alpha, 1 beta, 1 beta' and 1 omega subunit. When a sigma factor is associated with the core the holoenzyme is formed, which can initiate transcription.

It carries out the reaction RNA(n) + a ribonucleoside 5'-triphosphate = RNA(n+1) + diphosphate. In terms of biological role, promotes RNA polymerase assembly. Latches the N- and C-terminal regions of the beta' subunit thereby facilitating its interaction with the beta and alpha subunits. The polypeptide is DNA-directed RNA polymerase subunit omega (Dichelobacter nodosus (strain VCS1703A)).